A 303-amino-acid chain; its full sequence is Glycine betaine/carnitine/choline-binding protein OpuCC (303 aa).

The N-terminal stretch at 1 to 20 (MTKIKWLGAFALVFVMLLGG) is a signal peptide. Cysteine 21 carries N-palmitoyl cysteine lipidation. Cysteine 21 is lipidated: S-diacylglycerol cysteine.

Belongs to the OsmX family. As to quaternary structure, the complex is composed of two ATP-binding proteins (OpuCA), two transmembrane proteins (OpuCB and OpuCD) and a solute-binding protein (OpuCC).

The protein localises to the cell membrane. Its function is as follows. Member of a high affinity multicomponent binding-protein-dependent transport system for glycine betaine, carnitine, and choline. The polypeptide is Glycine betaine/carnitine/choline-binding protein OpuCC (opuCC) (Bacillus subtilis (strain 168)).